Consider the following 20-residue polypeptide: Neurotoxin BmK 18(2) (20 aa).

The region spanning 2–20 (RDAYIAEDYDCVYHCARDA) is the LCN-type CS-alpha/beta domain.

The protein belongs to the long (4 C-C) scorpion toxin superfamily. Sodium channel inhibitor family. Alpha subfamily. Expressed by the venom gland.

It localises to the secreted. Binds to sodium channels (Nav) and inhibits the inactivation of the activated channels, thereby blocking neuronal transmission. In Olivierus martensii (Manchurian scorpion), this protein is Neurotoxin BmK 18(2).